The chain runs to 148 residues: Hemoglobin subunit beta-4 (148 aa).

Positions 3–148 (DWTDPERSAI…VVSALGRQYH (146 aa)) constitute a Globin domain. Histidine 64 and histidine 93 together coordinate heme b.

This sequence belongs to the globin family. As to quaternary structure, heterotetramer of two alpha chains and two beta chains. In terms of tissue distribution, red blood cells.

Functionally, involved in oxygen transport from gills to the various peripheral tissues. The sequence is that of Hemoglobin subunit beta-4 (hbb4) from Oncorhynchus mykiss (Rainbow trout).